Reading from the N-terminus, the 448-residue chain is Late embryogenesis abundant protein ECP63 (448 aa).

2 stretches are compositionally biased toward basic and acidic residues: residues 282 to 326 (TEEA…EEAG) and 334 to 354 (QKTR…KDSA). Disordered stretches follow at residues 282-360 (TEEA…RGNE) and 411-448 (SKPG…KGKL). Residues 297–331 (KENMEKAGEVTRQKMEEMRLEGKELKEEAGAKAQE) adopt a coiled-coil conformation. Residues 420–432 (LKASDQMTGQTFN) show a composition bias toward polar residues. The span at 435-448 (GRMDDDARKDKGKL) shows a compositional bias: basic and acidic residues.

The protein belongs to the LEA type 4 family. In terms of tissue distribution, expressed in mature seeds.

May be involved in the BHLH109-mediated regulation of somatic embryogenesis. The polypeptide is Late embryogenesis abundant protein ECP63 (Arabidopsis thaliana (Mouse-ear cress)).